The chain runs to 195 residues: Protein GrpE (195 aa).

Over residues 1–14 (MQEPHDQEPIEKQK) the composition is skewed to basic and acidic residues. The disordered stretch occupies residues 1 to 45 (MQEPHDQEPIEKQKLPGMDDVLETEHSGTVAGNTERAGEDAAPSL).

Belongs to the GrpE family. Homodimer.

The protein resides in the cytoplasm. Functionally, participates actively in the response to hyperosmotic and heat shock by preventing the aggregation of stress-denatured proteins, in association with DnaK and GrpE. It is the nucleotide exchange factor for DnaK and may function as a thermosensor. Unfolded proteins bind initially to DnaJ; upon interaction with the DnaJ-bound protein, DnaK hydrolyzes its bound ATP, resulting in the formation of a stable complex. GrpE releases ADP from DnaK; ATP binding to DnaK triggers the release of the substrate protein, thus completing the reaction cycle. Several rounds of ATP-dependent interactions between DnaJ, DnaK and GrpE are required for fully efficient folding. In Nitrosomonas europaea (strain ATCC 19718 / CIP 103999 / KCTC 2705 / NBRC 14298), this protein is Protein GrpE.